Reading from the N-terminus, the 121-residue chain is Large ribosomal subunit protein uL24 (121 aa).

The interval 1 to 23 (MVRIESSQPRKQRKARYDAPSHM) is disordered.

The protein belongs to the universal ribosomal protein uL24 family. As to quaternary structure, part of the 50S ribosomal subunit.

In terms of biological role, one of two assembly initiator proteins, it binds directly to the 5'-end of the 23S rRNA, where it nucleates assembly of the 50S subunit. Functionally, located at the polypeptide exit tunnel on the outside of the subunit. This chain is Large ribosomal subunit protein uL24, found in Methanoregula boonei (strain DSM 21154 / JCM 14090 / 6A8).